A 486-amino-acid chain; its full sequence is ATP synthase subunit beta 2 (486 aa).

166–173 is a binding site for ATP; sequence GGAGVGKT.

This sequence belongs to the ATPase alpha/beta chains family. In terms of assembly, F-type ATPases have 2 components, CF(1) - the catalytic core - and CF(0) - the membrane proton channel. CF(1) has five subunits: alpha(3), beta(3), gamma(1), delta(1), epsilon(1). CF(0) has three main subunits: a(1), b(2) and c(9-12). The alpha and beta chains form an alternating ring which encloses part of the gamma chain. CF(1) is attached to CF(0) by a central stalk formed by the gamma and epsilon chains, while a peripheral stalk is formed by the delta and b chains.

Its subcellular location is the cell inner membrane. It carries out the reaction ATP + H2O + 4 H(+)(in) = ADP + phosphate + 5 H(+)(out). Its function is as follows. Produces ATP from ADP in the presence of a proton gradient across the membrane. The catalytic sites are hosted primarily by the beta subunits. This chain is ATP synthase subunit beta 2, found in Gluconobacter oxydans (strain 621H) (Gluconobacter suboxydans).